The chain runs to 879 residues: JmjC domain-containing histone demethylation protein 1 (879 aa).

Disordered stretches follow at residues 1 to 45, 117 to 212, and 407 to 449; these read MSEQ…EEGK, STSP…PKRK, and KDVK…EGLK. The segment at 23–116 adopts a PHD-type zinc-finger fold; sequence PEPCPLCRET…KWYCAPCLAR (94 aa). Basic and acidic residues-rich tracts occupy residues 183–192 and 407–433; these read IDMKSEREQQ and KDVK…HLTE. In terms of domain architecture, JmjC spans 416–598; sequence NDSRESSEIR…TQLRLRQIEI (183 aa). Position 472 (T472) interacts with substrate. Fe cation-binding residues include H475 and D477. K492 lines the substrate pocket. H566 is a Fe cation binding site. The interval 763–879 is disordered; it reads HPPAWSENRQ…KVEEDMDIDH (117 aa). Over residues 769 to 782 the composition is skewed to polar residues; the sequence is ENRQSPQIETTTVQ. Over residues 786–818 the composition is skewed to low complexity; the sequence is PSTSSSDAISGSGPGASPGASANGGANENEQAE. Basic and acidic residues predominate over residues 848 to 864; it reads FVEKKTVWGPKLDKEKI.

Belongs to the JHDM1 histone demethylase family. The cofactor is Fe(2+).

It is found in the nucleus. It catalyses the reaction N(6),N(6)-dimethyl-L-lysyl(36)-[histone H3] + 2 2-oxoglutarate + 2 O2 = L-lysyl(36)-[histone H3] + 2 formaldehyde + 2 succinate + 2 CO2. Functionally, histone demethylase that specifically demethylates 'Lys-36' of histone H3, thereby playing a central role in histone code. The chain is JmjC domain-containing histone demethylation protein 1 (JHD1) from Cryptococcus neoformans var. neoformans serotype D (strain B-3501A) (Filobasidiella neoformans).